Consider the following 178-residue polypeptide: Putative pre-16S rRNA nuclease (178 aa).

Composition is skewed to basic and acidic residues over residues 1–18 (MDHA…DPGR) and 50–60 (PRSKDRGPDAP). 2 disordered regions span residues 1–23 (MDHA…RRIG) and 36–60 (SDPD…PDAP).

The protein belongs to the YqgF nuclease family.

It localises to the cytoplasm. Functionally, could be a nuclease involved in processing of the 5'-end of pre-16S rRNA. This chain is Putative pre-16S rRNA nuclease, found in Rhodococcus opacus (strain B4).